The chain runs to 557 residues: Probable asparagine synthetase [glutamine-hydrolyzing] (557 aa).

The active-site For GATase activity is Cys2. Residues 2–188 form the Glutamine amidotransferase type-2 domain; that stretch reads CGILAVHHVA…PGHYYDSETK (187 aa). Residues 50–54, 75–77, and Asp99 each bind L-glutamine; these read RLAIV and NGE. The 336-residue stretch at 196-531 folds into the Asparagine synthetase domain; that stretch reads PSWWDENKIP…PRQCADTVMR (336 aa). Residues Leu235, Ile280, and 354 to 355 each bind ATP; that span reads SG. 2 positions are modified to phosphoserine: Ser391 and Ser489.

The protein resides in the cytoplasm. It localises to the nucleus. It carries out the reaction L-aspartate + L-glutamine + ATP + H2O = L-asparagine + L-glutamate + AMP + diphosphate + H(+). The protein operates within amino-acid biosynthesis; L-asparagine biosynthesis; L-asparagine from L-aspartate (L-Gln route): step 1/1. This is Probable asparagine synthetase [glutamine-hydrolyzing] (asn1) from Schizosaccharomyces pombe (strain 972 / ATCC 24843) (Fission yeast).